A 478-amino-acid polypeptide reads, in one-letter code: ATP synthase subunit beta (478 aa).

An ATP-binding site is contributed by Gly-151–Thr-158.

Belongs to the ATPase alpha/beta chains family. F-type ATPases have 2 components, CF(1) - the catalytic core - and CF(0) - the membrane proton channel. CF(1) has five subunits: alpha(3), beta(3), gamma(1), delta(1), epsilon(1). CF(0) has three main subunits: a(1), b(2) and c(9-12). The alpha and beta chains form an alternating ring which encloses part of the gamma chain. CF(1) is attached to CF(0) by a central stalk formed by the gamma and epsilon chains, while a peripheral stalk is formed by the delta and b chains.

Its subcellular location is the cell inner membrane. It catalyses the reaction ATP + H2O + 4 H(+)(in) = ADP + phosphate + 5 H(+)(out). In terms of biological role, produces ATP from ADP in the presence of a proton gradient across the membrane. The catalytic sites are hosted primarily by the beta subunits. The chain is ATP synthase subunit beta from Azorhizobium caulinodans (strain ATCC 43989 / DSM 5975 / JCM 20966 / LMG 6465 / NBRC 14845 / NCIMB 13405 / ORS 571).